Here is a 313-residue protein sequence, read N- to C-terminus: WD repeat-containing protein 82-A (313 aa).

WD repeat units lie at residues 19 to 58 (ENSDKINCFDFSPTGETVISSSDDDSIVLYDCQEGKPKRT), 105 to 144 (GHSKRVVALSMSPVDDTFISASLDKTIRLWDLRSPNCQGL), 146 to 184 (HLQGKPVCSFDPEGLIFAAGVNSEMVKLYDLRSFDKGPF), 192 to 231 (DRTCEWTSLKFSQDGKLILMSTNGGFLRLVDAFKGAVMHT), 236 to 276 (NNSK…KVAV), and 280 to 313 (KHTGPITCLQFNPKFMTFASACSNMAFWLPTIDD).

This sequence belongs to the WD repeat SWD2 family. In terms of assembly, component of the SET1/COMPASS complex. Component of the PNUTS-PP1 phosphatase complex.

The protein localises to the nucleus. Its subcellular location is the chromosome. The protein resides in the cytoplasm. In terms of biological role, regulatory component of the SET1/COMPASS complex implicated in the tethering of this complex to transcriptional start sites of active genes. Facilitates histone H3 'Lys-4' methylation (H3K4me) via recruitment of the SETD1A or SETD1B to the 'Ser-5' phosphorylated C-terminal domain (CTD) of RNA polymerase II large subunit (POLR2A). Component of the PNUTS-PP1 protein phosphatase complex, a protein phosphatase 1 (PP1) complex that promotes RNA polymerase II transcription pause-release, allowing transcription elongation. The polypeptide is WD repeat-containing protein 82-A (wdr82-a) (Xenopus laevis (African clawed frog)).